A 186-amino-acid polypeptide reads, in one-letter code: Astacin-like metalloprotease toxin 5 (186 aa).

The Peptidase M12A domain occupies N1–L186. 2 cysteine pairs are disulfide-bonded: C42–C177 and C63–C84. Zn(2+) is bound at residue H92. E93 is an active-site residue. Zn(2+) contacts are provided by H96 and H102. Residue N122 is glycosylated (N-linked (GlcNAc...) asparagine).

As to quaternary structure, monomer. Requires Zn(2+) as cofactor. In terms of tissue distribution, expressed by the venom gland.

It localises to the secreted. Inhibited by 1,10-phenanthroline. Functionally, zinc metalloprotease. Provoques deadhesion of endothelial cells from cell cultures, and also degradation of fibronectin, fibrinogen and gelatin in vitro. Its role in the venom is not fully understood but it might act as a spreading factor that facilitates diffusion of other venom toxins. Alternatively, it might be involved in the proteolytic processing of other venom toxins or it might play a role in extra-oral digestion of prey. The protein is Astacin-like metalloprotease toxin 5 of Loxosceles gaucho (Spider).